The sequence spans 146 residues: Acidic phospholipase A2 C (146 aa).

The signal sequence occupies residues 1 to 21 (MNPAHLLILAAVCVSPLGASS). The propeptide occupies 22–27 (NRPMPL). Disulfide bonds link Cys-38/Cys-98, Cys-53/Cys-145, Cys-55/Cys-71, Cys-70/Cys-126, Cys-77/Cys-119, Cys-87/Cys-112, and Cys-105/Cys-117. Positions 54, 56, and 58 each coordinate Ca(2+). His-74 is an active-site residue. Asp-75 is a Ca(2+) binding site. Asp-120 is an active-site residue.

It belongs to the phospholipase A2 family. Group I subfamily. D49 sub-subfamily. Ca(2+) serves as cofactor. In terms of tissue distribution, expressed by the venom gland.

It is found in the secreted. The catalysed reaction is a 1,2-diacyl-sn-glycero-3-phosphocholine + H2O = a 1-acyl-sn-glycero-3-phosphocholine + a fatty acid + H(+). Its function is as follows. PLA2 catalyzes the calcium-dependent hydrolysis of the 2-acyl groups in 3-sn-phosphoglycerides. The chain is Acidic phospholipase A2 C from Naja sputatrix (Malayan spitting cobra).